Here is an 83-residue protein sequence, read N- to C-terminus: uncharacterized protein (83 aa).

2 helical membrane-spanning segments follow: residues G23–A43 and S49–G69.

The protein localises to the cell membrane. This is an uncharacterized protein from Mycobacterium tuberculosis (strain CDC 1551 / Oshkosh).